The chain runs to 246 residues: Putative carboxymethylenebutenolidase (246 aa).

Catalysis depends on residues Cys-127, Asp-183, and His-215.

The protein belongs to the dienelactone hydrolase family.

The enzyme catalyses 2-(5-oxo-2,5-dihydrofuran-2-ylidene)acetate + H2O = 4-oxohex-2-enedioate + H(+). The polypeptide is Putative carboxymethylenebutenolidase (Synechocystis sp. (strain ATCC 27184 / PCC 6803 / Kazusa)).